A 458-amino-acid chain; its full sequence is 5-hydroxytryptamine receptor 2C (458 aa).

The first 32 residues, 1–32, serve as a signal peptide directing secretion; sequence MVNLRNAVHSFLVHLIGLLVWQCDISVSPVAA. Residues 33–55 lie on the Extracellular side of the membrane; it reads IVTDIFNTSDGGRFKFPDGVQNW. Residues 56–80 form a helical membrane-spanning segment; it reads PALSIVVIIIMTIGGNILVIMAVSM. At 81–86 the chain is on the cytoplasmic side; it reads EKKLHN. A helical membrane pass occupies residues 87–111; the sequence is ATNYFLMSLAIADMLVGLLVMPLSL. The Extracellular portion of the chain corresponds to 112 to 128; it reads LAILYDYVWPLPRYLCP. Cysteines 127 and 207 form a disulfide. Residues 129-151 traverse the membrane as a helical segment; it reads VWISLDVLFSTASIMHLCAISLD. T139 provides a ligand contact to ergotamine. The short motif at 151 to 153 is the DRY motif; important for ligand-induced conformation changes element; that stretch reads DRY. The Cytoplasmic portion of the chain corresponds to 152 to 167; that stretch reads RYVAIRNPIEHSRFNS. The helical transmembrane segment at 168 to 189 threads the bilayer; that stretch reads RTKAIMKIAIVWAISIGVSVPI. Topologically, residues 190-213 are extracellular; it reads PVIGLRDERKVFVNNTTCVLNDPN. L209 is a binding site for ergotamine. A helical transmembrane segment spans residues 214 to 236; the sequence is FVLIGSFVAFFIPLTIMVITYCL. At 237 to 311 the chain is on the cytoplasmic side; sequence TIYVLRRQAL…AINNERKASK (75 aa). Residues 274–301 are disordered; it reads EENSANPNQDQNARRRKKKERRPRGTMQ. Positions 287 to 297 are enriched in basic residues; that stretch reads RRRKKKERRPR. The helical transmembrane segment at 312–336 threads the bilayer; the sequence is VLGIVFFVFLIMWCPFFITNILSVL. C337 and C341 form a disulfide bridge. Topologically, residues 337–347 are extracellular; that stretch reads CEKSCNQKLME. The chain crosses the membrane as a helical span at residues 348–370; that stretch reads KLLNVFVWIGYVCSGINPLVYTL. The NPxxY motif; important for ligand-induced conformation changes and signaling motif lies at 364–368; sequence NPLVY. Topologically, residues 371–458 are cytoplasmic; it reads FNKIYRRAFS…SVVSERISSV (88 aa). Residues 456–458 carry the PDZ-binding motif; that stretch reads SSV.

This sequence belongs to the G-protein coupled receptor 1 family. Interacts with MPDZ. Interacts with ARRB2. Interacts with MPP3; this interaction stabilizes the receptor at the plasma membrane and prevents the desensitization of the HTR2C receptor-mediated calcium response.

Its subcellular location is the cell membrane. Functionally, G-protein coupled receptor for 5-hydroxytryptamine (serotonin). Also functions as a receptor for various drugs and psychoactive substances, including ergot alkaloid derivatives, 1-2,5,-dimethoxy-4-iodophenyl-2-aminopropane (DOI) and lysergic acid diethylamide (LSD). Ligand binding causes a conformation change that triggers signaling via guanine nucleotide-binding proteins (G proteins) and modulates the activity of downstream effectors. HTR2C is coupled to G(q)/G(11) G alpha proteins and activates phospholipase C-beta, releasing diacylglycerol (DAG) and inositol 1,4,5-trisphosphate (IP3) second messengers that modulate the activity of phosphatidylinositol 3-kinase and promote the release of Ca(2+) ions from intracellular stores, respectively. Beta-arrestin family members inhibit signaling via G proteins and mediate activation of alternative signaling pathways. Regulates neuronal activity via the activation of short transient receptor potential calcium channels in the brain, and thereby modulates the activation of pro-opiomelanocortin neurons and the release of CRH that then regulates the release of corticosterone. Plays a role in the regulation of appetite and eating behavior, responses to anxiogenic stimuli and stress. Plays a role in insulin sensitivity and glucose homeostasis. The sequence is that of 5-hydroxytryptamine receptor 2C from Pan troglodytes (Chimpanzee).